Consider the following 225-residue polypeptide: MSSQALDSAKVAFIEAAIEHGVLLFGNFTLKSGRQSPYFFNAGLLYSSSLLSTTAQAYAKVLSSSRIPDFDVLFGPAYKGISLAAVSAVSLYQQTGKDIGYCYNRKEKKDHGEGGTMVGAPLKGRIVIIDDVLTSGKAIREAIDILKASPEAKLVGIVQLVDRQEKGQSGSGKSTVQEVEEEFGVPVEPIIGLDDIVKYLESSGKWEKELQEVRKYRAEYGVQRS.

A 5-phospho-alpha-D-ribose 1-diphosphate-binding site is contributed by Lys31. Orotate is bound at residue 39 to 40; sequence FF. Residues 78-79, Arg105, Lys106, Lys109, His111, and 130-138 each bind 5-phospho-alpha-D-ribose 1-diphosphate; these read YK and DDVLTSGKA. Orotate contacts are provided by Thr134 and Arg163.

This sequence belongs to the purine/pyrimidine phosphoribosyltransferase family. PyrE subfamily. As to quaternary structure, homodimer.

The enzyme catalyses orotidine 5'-phosphate + diphosphate = orotate + 5-phospho-alpha-D-ribose 1-diphosphate. It participates in pyrimidine metabolism; UMP biosynthesis via de novo pathway; UMP from orotate: step 1/2. Functionally, catalyzes the transfer of a ribosyl phosphate group from 5-phosphoribose 1-diphosphate to orotate, leading to the formation of orotidine monophosphate (OMP). The protein is Orotate phosphoribosyltransferase (URA5) of Cryptococcus neoformans var. neoformans serotype D (strain B-3501A) (Filobasidiella neoformans).